Reading from the N-terminus, the 933-residue chain is MWEPQGSLDPVLESIENELRDQVAEARSRWAGFDARLAIVQVGGREDSNVYIRMKLRAAENIGITAEHIQLPRDITETELLANITSLNESPYVHGIIVQMPLDSVHPIDSHAITDAVSPDKDVDGLNTINEGRVRVGDLSGFIPCTPAGCVELIKRTGVTIAGKNVVVLGRSRIVGTPVSELLKWEHATVTVCHSKTKNLSEITKTADILVVAIGRGEMVRGSWIKPGAVVIDCGINPISDPTKKSGQRLVGDVAYEEAVQVASHVTPVPGGVGPMTVAMLMRNTVQAARRQLDRLLAPTWPLRPLRITPLSPPPSDIVIARSQKPKDISELAHEIGLFSNEVSQYGRTKAKISLSVLDRMRNQQGAKYIVVAGITPTPLGEGKSTTLLGLVQALSAHRGRNSFAVMRQPSQGPTFGVKGGAAGGGYSQVIPMEEFNLHLTGDIHAGTAANNLLAAQMDARIFHELTQKDGPLFDRLVPKIKGVRKFSPIQLRRLKRLGITKTDPDTLTEGEKSKFARLNIDTSKIMWNRVVDLNDRYLRKITVGQSPTEKGFTRETAFDISVASEIMAILALGRDVEDIKERLANMVVALDKSGNPVTADDLGMTGALLVLLRDAFEPTLMQSLEGTPVLVHTGPFANIRHGCSSILADKIAMKLAGENGYVATEAGFGSDIGMEKFFDIKCRASGDTPHCAVIVSTVRALKMHGGGPPVSAGMPLNDVYVQENLELLSKGLCNLGKHISNGNKFGVPVVVAINKHGNDTPAELNLVKEFAVKNGAFRAVLCDHWAKGGLGALELADAVIEACDSKSKFDFLYPLQLSIQEKIQIIAKEMYGAGQVEYTDEVLEKIKTFTDMGYDKFPICMAKTSNSLTGDPAVKGAPTGFTLKINGIFASVGAGFVVPMVGEISKMPGLPTRPSIYDIDLNTKTGEIEGLF.

Residues 1–303 (MWEPQGSLDP…DRLLAPTWPL (303 aa)) are methylenetetrahydrofolate dehydrogenase and cyclohydrolase. Substrate contacts are provided by residues 51 to 55 (YIRMK) and 98 to 100 (VQM). NADP(+)-binding positions include 170-172 (GRS) and serine 195. 270–274 (PGGVG) contributes to the substrate binding site. Residues 304–933 (RPLRITPLSP…TKTGEIEGLF (630 aa)) are formyltetrahydrofolate synthetase. ATP is bound at residue 378–385 (TPLGEGKS).

It in the N-terminal section; belongs to the tetrahydrofolate dehydrogenase/cyclohydrolase family. This sequence in the C-terminal section; belongs to the formate--tetrahydrofolate ligase family. As to quaternary structure, homodimer.

It is found in the cytoplasm. The enzyme catalyses (6R)-5,10-methylene-5,6,7,8-tetrahydrofolate + NADP(+) = (6R)-5,10-methenyltetrahydrofolate + NADPH. It carries out the reaction (6R)-5,10-methenyltetrahydrofolate + H2O = (6R)-10-formyltetrahydrofolate + H(+). The catalysed reaction is (6S)-5,6,7,8-tetrahydrofolate + formate + ATP = (6R)-10-formyltetrahydrofolate + ADP + phosphate. The protein operates within one-carbon metabolism; tetrahydrofolate interconversion. The polypeptide is C-1-tetrahydrofolate synthase, cytoplasmic (Spodoptera frugiperda (Fall armyworm)).